The following is a 615-amino-acid chain: MPDYRSKTSTHGRNMAGARALWRATGMKDEDFKKPIIAIANSFTQFVPGHVHLKDMGQLVAREVERAGGVAKEFNTIAVDDGIAMGHDGMLYSLPSREIIADSVEYMVNAHCADAIVCISNCDKITPGMLMASLRLNIPVIFVSGGPMEAGKTKLASHGLDLVDAMVIAADSTASDEKVAEYERSACPTCGSCSGMFTANSMNCLTEALGLALPGNGSALATHSDREQLFLQAGRTIVDLCRQYYKENDDSVLPRNIANFKAFENAMTLDIAMGGSTNTILHLLAAAQEAEIDFDLRHIDHLSRKVPQLCKVAPNIQKYHMEDVHRAGGIFSILGELARGGLLHTDLPTVHSKTLAEGIAKWDITQTDDEAVHTFFKAGPAGIPTQTAFSQSTRWESLDDDRENGCIRSVQHAYSQEGGLAVLYGNIALDGCVVKTAGVDESIHVFEGSAKIFESQDSAVRGILADEVKAGDIVIIRYEGPKGGPGMQEMLYPTSYLKSKGLGKDCALLTDGRFSGGTSGLSIGHASPEAAAGGAIGLVRDGDKVLIDIPNRSINLLIDDAEMAERRTEQDKKGWKPVESRPRKVTTALKAYALLATSADKGAVRDKALLDKLVP.

Asp81 provides a ligand contact to Mg(2+). Cys122 is a binding site for [2Fe-2S] cluster. Mg(2+) is bound by residues Asp123 and Lys124. Lys124 is modified (N6-carboxylysine). Cys193 is a binding site for [2Fe-2S] cluster. Glu489 serves as a coordination point for Mg(2+). Ser515 (proton acceptor) is an active-site residue.

It belongs to the IlvD/Edd family. Homodimer. [2Fe-2S] cluster serves as cofactor. Requires Mg(2+) as cofactor.

The catalysed reaction is (2R)-2,3-dihydroxy-3-methylbutanoate = 3-methyl-2-oxobutanoate + H2O. The enzyme catalyses (2R,3R)-2,3-dihydroxy-3-methylpentanoate = (S)-3-methyl-2-oxopentanoate + H2O. Its pathway is amino-acid biosynthesis; L-isoleucine biosynthesis; L-isoleucine from 2-oxobutanoate: step 3/4. It functions in the pathway amino-acid biosynthesis; L-valine biosynthesis; L-valine from pyruvate: step 3/4. In terms of biological role, functions in the biosynthesis of branched-chain amino acids. Catalyzes the dehydration of (2R,3R)-2,3-dihydroxy-3-methylpentanoate (2,3-dihydroxy-3-methylvalerate) into 2-oxo-3-methylpentanoate (2-oxo-3-methylvalerate) and of (2R)-2,3-dihydroxy-3-methylbutanoate (2,3-dihydroxyisovalerate) into 2-oxo-3-methylbutanoate (2-oxoisovalerate), the penultimate precursor to L-isoleucine and L-valine, respectively. The chain is Dihydroxy-acid dehydratase from Pseudomonas syringae pv. syringae (strain B728a).